Consider the following 336-residue polypeptide: DNA repair protein RAD51 homolog B (336 aa).

The HhH domain maps to 45-74 (TVEAVAYAPKKELLNIKGISEAKAEKILAE). ATP is bound at residue 124–131 (GEFRTGKT). Positions 242 to 257 (LARFLRMLLRLADEFG) match the Nuclear export signal motif.

It belongs to the RecA family. RAD51 subfamily. In terms of assembly, forms linear homooligomers, giving rise to a RAD51 nucleoprotein filament, which is essential for strand-pairing reactions during DNA recombination.

It localises to the nucleus. The protein resides in the cytoplasm. Its subcellular location is the chromosome. Functionally, plays an important role in homologous strand exchange, a key step in DNA repair through homologous recombination (HR). Binds to single-stranded DNA in an ATP-dependent manner to form nucleoprotein filaments which are essential for the homology search and strand exchange. Catalyzes the recognition of homology and strand exchange between homologous DNA partners to form a joint molecule between a processed DNA break and the repair template. Recruited to resolve stalled replication forks during replication stress. Also involved in interstrand cross-link repair. The sequence is that of DNA repair protein RAD51 homolog B (rad51-b) from Xenopus laevis (African clawed frog).